The chain runs to 1088 residues: Probable cellulose synthase A catalytic subunit 9 [UDP-forming] (1088 aa).

Methionine 1 is modified (N-acetylmethionine). Residues 1–283 (MNTGGRLIAG…RSSRINPYRM (283 aa)) lie on the Cytoplasmic side of the membrane. Zn(2+) contacts are provided by cysteine 39, cysteine 42, cysteine 58, cysteine 61, cysteine 66, cysteine 69, cysteine 81, and cysteine 84. An RING-type; degenerate zinc finger spans residues 39–85 (CKICRDEIELTDNGEPFIACNECAFPTCRPCYEYERREGNQACPQCG). A helical transmembrane segment spans residues 284–304 (LIFCRLAILGLFFHYRILHPV). Residues 305-306 (ND) are Extracellular-facing. Residues 307–327 (AFGLWLTSVICEIWFAVSWIL) form a helical membrane-spanning segment. Topologically, residues 328 to 871 (DQFPKWYPIE…INSVVYPWTS (544 aa)) are cytoplasmic. 5 residues coordinate UDP-alpha-D-glucose: serine 366, lysine 372, glutamate 373, aspartate 402, and lysine 543. Aspartate 402 is an active-site residue. Lysine 544 and aspartate 568 together coordinate Mn(2+). Residue aspartate 788 is part of the active site. Residues 872–892 (LPLLVYCSLPAICLLTGKFIV) traverse the membrane as a helical segment. At 893-897 (PEISN) the chain is on the extracellular side. Residues 898 to 918 (YAGILFLLMFMSIAVTGILEM) form a helical membrane-spanning segment. Residues 919 to 933 (QWGKIGIDDWWRNEQ) lie on the Cytoplasmic side of the membrane. The helical transmembrane segment at 934–954 (FWVIGGVSSHLFALFQGLLKV) threads the bilayer. Residues 955 to 983 (LAGVSTNFTVTSKAADDGEFSELYIFKWT) are Extracellular-facing. Asparagine 961 carries an N-linked (GlcNAc...) asparagine glycan. Residues 984-1004 (SLLIPPTTLLIINIVGVIVGV) form a helical membrane-spanning segment. Topologically, residues 1005–1015 (SDAINNGYDSW) are cytoplasmic. Residues 1016 to 1036 (GPLFGRLFFALWVIVHLYPFL) traverse the membrane as a helical segment. The Extracellular segment spans residues 1037 to 1045 (KGLLGKQDR). Residues 1046-1066 (VPTIILVWSILLASILTLLWV) traverse the membrane as a helical segment. At 1067–1088 (RVNPFVSKDGPVLEICGLDCLK) the chain is on the cytoplasmic side.

This sequence belongs to the glycosyltransferase 2 family. Plant cellulose synthase subfamily. The cofactor is Mn(2+). Zn(2+) serves as cofactor. In terms of tissue distribution, expressed in young plants, stems and flowers.

It localises to the cell membrane. The catalysed reaction is [(1-&gt;4)-beta-D-glucosyl](n) + UDP-alpha-D-glucose = [(1-&gt;4)-beta-D-glucosyl](n+1) + UDP + H(+). It functions in the pathway glycan metabolism; plant cellulose biosynthesis. Functionally, probable catalytic subunit of cellulose synthase terminal complexes ('rosettes'), required for beta-1,4-glucan microfibril crystallization, a major mechanism of the cell wall formation. The chain is Probable cellulose synthase A catalytic subunit 9 [UDP-forming] from Arabidopsis thaliana (Mouse-ear cress).